Reading from the N-terminus, the 219-residue chain is tRNA (guanine-N(7)-)-methyltransferase (219 aa).

Glu-46, Glu-71, Asp-100, and Asp-122 together coordinate S-adenosyl-L-methionine. The active site involves Asp-122. Lys-126 serves as a coordination point for substrate. Residues 128 to 133 form an interaction with RNA region; sequence KHEKRR. Substrate-binding positions include Asp-158 and 199–202; that span reads TEYE.

Belongs to the class I-like SAM-binding methyltransferase superfamily. TrmB family.

It catalyses the reaction guanosine(46) in tRNA + S-adenosyl-L-methionine = N(7)-methylguanosine(46) in tRNA + S-adenosyl-L-homocysteine. It functions in the pathway tRNA modification; N(7)-methylguanine-tRNA biosynthesis. In terms of biological role, catalyzes the formation of N(7)-methylguanine at position 46 (m7G46) in tRNA. This Oenococcus oeni (strain ATCC BAA-331 / PSU-1) protein is tRNA (guanine-N(7)-)-methyltransferase.